We begin with the raw amino-acid sequence, 407 residues long: MEPLDNTSLEESQFRPEKKEKSTCSICREDGDGYHFGAEACRACAAFFRRSVSLDKTYLCRGNNDCEITANIRCMCRSCRFAKCLEVGMNPAGVQQRRDTIGKREIKPDSTDLMQLLGSVGDGYPPTTSAQSALVEDLHPSFNDRMPILMKMRVNYRKMDNARLVIHRKDGQSLFKEKTPKAVNYKEACAQSIREVSLVADWVAWCFDDFVTLPMDQKKVLFRNFYTPFSVLEGAFLCHINDTSNALILPSGDYIDTNNLKSFFNIPDEEQPMTDDEIEKFCRMFKPSFELNRRGLVLPMMAEKIDVFEFFALCTFVFWDFGLDEQTDDCMMIGKSVKDRVMKELAFYLRCAKRLEEPSLRVASLLTLLPALQRCVRRFQEDIEITNVFNVYAPPKDFYDLVNGKFC.

Residues 21-96 constitute a DNA-binding region (nuclear receptor); that stretch reads KSTCSICRED…VGMNPAGVQQ (76 aa). 2 NR C4-type zinc fingers span residues 24–44 and 60–79; these read CSIC…CRAC and CRGN…CRSC. The NR LBD domain occupies 130–405; it reads AQSALVEDLH…KDFYDLVNGK (276 aa). The AF-2 stretch occupies residues 394–405; sequence PPKDFYDLVNGK.

Belongs to the nuclear hormone receptor family. As to expression, expressed in intestinal epithelial cells, excretory gland cells and in several head neurons.

It localises to the nucleus. Functionally, nuclear receptor which acts as a transcription activator. Binds small molecule ligands, such as phenazine 1-carboxamide (PCN), a pathogen-derived metabolite, leading to modulation of innate immune responses against virulent pathogens. On exposure to exogenous PCN, P.aeruginosa and other xenobiotic immunostimulant such as R24, activates immune response genes, including irg-4, irg-5, mul-1, drd-50, cyp-35C1 and ugt-30, probably via direct interaction with their promoters, and independent of the p38 MAPK pmk-1 pathway. Exhibits higher affinity to R24 than PCN and thus induces stronger immune response. Binds its own promoter thereby autoregulating its expression in the head hypodermis and the pharynx. Possibly plays a role in lipid storage or catabolism. This Caenorhabditis elegans protein is Nuclear hormone receptor family member nhr-86 (nhr-86).